The primary structure comprises 58 residues: Large ribosomal subunit protein uL30 (58 aa).

This sequence belongs to the universal ribosomal protein uL30 family. As to quaternary structure, part of the 50S ribosomal subunit.

The polypeptide is Large ribosomal subunit protein uL30 (Parabacteroides distasonis (strain ATCC 8503 / DSM 20701 / CIP 104284 / JCM 5825 / NCTC 11152)).